A 400-amino-acid chain; its full sequence is Bifunctional enzyme IspD/IspF (400 aa).

A 2-C-methyl-D-erythritol 4-phosphate cytidylyltransferase region spans residues methionine 1–isoleucine 244. Residues arginine 245–threonine 400 are 2-C-methyl-D-erythritol 2,4-cyclodiphosphate synthase. Residues aspartate 251 and histidine 253 each contribute to the a divalent metal cation site. 4-CDP-2-C-methyl-D-erythritol 2-phosphate is bound by residues aspartate 251–histidine 253 and histidine 277–serine 278. Histidine 285 contributes to the a divalent metal cation binding site. Residues aspartate 299–glycine 301, threonine 375–glutamate 378, phenylalanine 382, and arginine 385 each bind 4-CDP-2-C-methyl-D-erythritol 2-phosphate.

The protein in the N-terminal section; belongs to the IspD/TarI cytidylyltransferase family. IspD subfamily. In the C-terminal section; belongs to the IspF family. The cofactor is a divalent metal cation.

It carries out the reaction 2-C-methyl-D-erythritol 4-phosphate + CTP + H(+) = 4-CDP-2-C-methyl-D-erythritol + diphosphate. The catalysed reaction is 4-CDP-2-C-methyl-D-erythritol 2-phosphate = 2-C-methyl-D-erythritol 2,4-cyclic diphosphate + CMP. Its pathway is isoprenoid biosynthesis; isopentenyl diphosphate biosynthesis via DXP pathway; isopentenyl diphosphate from 1-deoxy-D-xylulose 5-phosphate: step 2/6. It functions in the pathway isoprenoid biosynthesis; isopentenyl diphosphate biosynthesis via DXP pathway; isopentenyl diphosphate from 1-deoxy-D-xylulose 5-phosphate: step 4/6. In terms of biological role, bifunctional enzyme that catalyzes the formation of 4-diphosphocytidyl-2-C-methyl-D-erythritol from CTP and 2-C-methyl-D-erythritol 4-phosphate (MEP) (IspD), and catalyzes the conversion of 4-diphosphocytidyl-2-C-methyl-D-erythritol 2-phosphate (CDP-ME2P) to 2-C-methyl-D-erythritol 2,4-cyclodiphosphate (ME-CPP) with a corresponding release of cytidine 5-monophosphate (CMP) (IspF). In Dinoroseobacter shibae (strain DSM 16493 / NCIMB 14021 / DFL 12), this protein is Bifunctional enzyme IspD/IspF.